The sequence spans 98 residues: NADH-ubiquinone oxidoreductase chain 4L (98 aa).

Helical transmembrane passes span 1 to 21 (MSLVHMNIALAFTVALLGLLM), 29 to 49 (SLLCLEGMMLTLFIMGTIMIL), and 61 to 81 (IILLVFAACEAAVGLSLLVMV).

This sequence belongs to the complex I subunit 4L family. Core subunit of respiratory chain NADH dehydrogenase (Complex I) which is composed of 45 different subunits.

Its subcellular location is the mitochondrion inner membrane. The enzyme catalyses a ubiquinone + NADH + 5 H(+)(in) = a ubiquinol + NAD(+) + 4 H(+)(out). Core subunit of the mitochondrial membrane respiratory chain NADH dehydrogenase (Complex I) which catalyzes electron transfer from NADH through the respiratory chain, using ubiquinone as an electron acceptor. Part of the enzyme membrane arm which is embedded in the lipid bilayer and involved in proton translocation. The sequence is that of NADH-ubiquinone oxidoreductase chain 4L (MT-ND4L) from Sorex unguiculatus (Long-clawed shrew).